A 199-amino-acid chain; its full sequence is 3-isopropylmalate dehydratase small subunit (199 aa).

Belongs to the LeuD family. LeuD type 1 subfamily. As to quaternary structure, heterodimer of LeuC and LeuD.

The catalysed reaction is (2R,3S)-3-isopropylmalate = (2S)-2-isopropylmalate. It functions in the pathway amino-acid biosynthesis; L-leucine biosynthesis; L-leucine from 3-methyl-2-oxobutanoate: step 2/4. Its function is as follows. Catalyzes the isomerization between 2-isopropylmalate and 3-isopropylmalate, via the formation of 2-isopropylmaleate. The polypeptide is 3-isopropylmalate dehydratase small subunit (Pseudoalteromonas translucida (strain TAC 125)).